The sequence spans 101 residues: Large ribosomal subunit protein bL28 (101 aa).

The protein belongs to the bacterial ribosomal protein bL28 family.

The chain is Large ribosomal subunit protein bL28 from Methylorubrum extorquens (strain CM4 / NCIMB 13688) (Methylobacterium extorquens).